Reading from the N-terminus, the 66-residue chain is Cold shock protein CspC (66 aa).

Residues 4–63 form the CSD domain; the sequence is GTVKWFNAEKGFGFIERENGDDVFVHFSAIQSDGFKSLDEGQKVSFDVEQGARGAQAANV.

It localises to the cytoplasm. The protein is Cold shock protein CspC (cspC) of Bacillus subtilis (strain 168).